A 1358-amino-acid chain; its full sequence is Probable serine/threonine-protein kinase ifkB (1358 aa).

Residues 1–582 (MIGKGGFGVV…TKQLLESGLL (582 aa)) form the Protein kinase domain. Residues 2 to 10 (IGKGGFGVV) and K25 contribute to the ATP site. Positions 125 to 359 (GANNTAGGGD…SSSRKKPPKE (235 aa)) are disordered. Residues 136 to 148 (VSNANSNKSMIVG) are compositionally biased toward polar residues. Residues 149–196 (NNNKKLTLSSSNTSSSSSLLSNNKSKILNTSKSTSTNTSTSTSTSNTN) show a composition bias toward low complexity. The segment covering 197–208 (KNKKISKKKKSK) has biased composition (basic residues). A compositionally biased stretch (low complexity) spans 258 to 285 (NNNNDSNNNYHSDNESDSFSGSISMSDG). Acidic residues predominate over residues 306–333 (DDNENDDDDEEDDDDEYDEEDDDYETFD). Residues 342-351 (SNNSKLSTSS) show a composition bias toward low complexity. The active-site Proton acceptor is D413. Disordered stretches follow at residues 445 to 470 (DDLNSSTSNAANNINLSSSTNSTAQQ) and 1148 to 1204 (GSGG…QQTS). The span at 447–466 (LNSSTSNAANNINLSSSTNS) shows a compositional bias: low complexity. Residues 1148-1172 (GSGGSGGSGGGSSMSSGGGGGGNSN) show a composition bias toward gly residues. Residues 1185–1199 (SNQSTSSSGNSNNSN) are compositionally biased toward low complexity.

The protein belongs to the protein kinase superfamily. Ser/Thr protein kinase family. GCN2 subfamily.

It catalyses the reaction L-seryl-[protein] + ATP = O-phospho-L-seryl-[protein] + ADP + H(+). The catalysed reaction is L-threonyl-[protein] + ATP = O-phospho-L-threonyl-[protein] + ADP + H(+). This chain is Probable serine/threonine-protein kinase ifkB (ifkB), found in Dictyostelium discoideum (Social amoeba).